The chain runs to 70 residues: Turripeptide Lol9.1 (70 aa).

The signal sequence occupies residues 1–20 (MKVYCLLLVLLVGLVSQAHG). One can recognise a Kazal-like domain in the interval 21–70 (KPTKRCLSVCSAEYEPVCGSDGKTYANKCHLMTEACWSPTSITLVHEGKC). Intrachain disulfides connect Cys26–Cys56, Cys30–Cys49, and Cys38–Cys70.

This sequence belongs to the conopeptide P-like superfamily. As to expression, expressed by the venom duct.

It localises to the secreted. Acts as a neurotoxin by inhibiting an ion channel. May also act as a serine protease inhibitor, since it possess the kazal serine protease inhibitor signature. This Iotyrris olangoensis (Sea snail) protein is Turripeptide Lol9.1.